Consider the following 143-residue polypeptide: Host transcription reprogramming factor 8 (143 aa).

The signal sequence occupies residues 1-19 (MHTYKFIQIALLFASVALA). Pro residues predominate over residues 24 to 34 (PSPPNPPPVPQ). A disordered region spans residues 24–43 (PSPPNPPPVPQLPNSETKSN). The C2H2-type 1 zinc finger occupies 48–71 (HSCEFCGVVKPSGPAYLEHYHQNH). The segment at 77–99 (GKLATPSPPNPPPVPTQKVETHA) is disordered. The span at 82 to 91 (PSPPNPPPVP) shows a compositional bias: pro residues. The C2H2-type 2 zinc finger occupies 103-126 (HGCEWCNKVEPSGPAYIKHYKENH).

Its subcellular location is the secreted. The protein localises to the host nucleus. Its function is as follows. Probable secreted effector that translocates into the nuclei of host cells to reprogram the expression of targeted genes by binding on effector binding elements in rice. This Pyricularia oryzae (strain 70-15 / ATCC MYA-4617 / FGSC 8958) (Rice blast fungus) protein is Host transcription reprogramming factor 8.